The primary structure comprises 60 residues: Arabinogalactan protein 12 (60 aa).

The first 27 residues, 1–27 (MESMKMKLIVVLMVAIVAFSAVGNVAA), serve as a signal peptide directing secretion. At glutamine 28 the chain carries Pyrrolidone carboxylic acid. 4-hydroxyproline occurs at positions 32, 34, and 36. 3 O-linked (Ara...) hydroxyproline glycosylation sites follow: proline 32, proline 34, and proline 36. The GPI-anchor amidated serine moiety is linked to residue serine 38. A propeptide spans 39–60 (DAAMFVPALFASVAALASGFLF) (removed in mature form).

Belongs to the AG-peptide AGP family. Post-translationally, contains 4-hydroxyproline; hydroxylated on Pro-32, Pro-34 and Pro-36. In terms of processing, O-glycosylated on hydroxyprolines; noncontiguous hydroxylproline residues are glycosylated with arabinogalactan. In terms of tissue distribution, expressed in reproductive tissues. Expressed in chalaza, funiculus, stigma, septum, style and transmitting tract.

It is found in the cell membrane. Its function is as follows. Proteoglycan that seems to be implicated in diverse developmental roles such as differentiation, cell-cell recognition, embryogenesis and programmed cell death. This Arabidopsis thaliana (Mouse-ear cress) protein is Arabinogalactan protein 12.